An 861-amino-acid polypeptide reads, in one-letter code: DNA mismatch repair protein MutS (861 aa).

618 to 625 provides a ligand contact to ATP; the sequence is GPNMGGKS.

This sequence belongs to the DNA mismatch repair MutS family.

Functionally, this protein is involved in the repair of mismatches in DNA. It is possible that it carries out the mismatch recognition step. This protein has a weak ATPase activity. In Shewanella sp. (strain MR-7), this protein is DNA mismatch repair protein MutS.